The following is a 558-amino-acid chain: Ribonuclease J (558 aa).

Residues H81, H83, D85, H86, H148, and D170 each coordinate Zn(2+). 371-375 (HVSGH) lines the substrate pocket. H397 contacts Zn(2+).

The protein belongs to the metallo-beta-lactamase superfamily. RNA-metabolizing metallo-beta-lactamase-like family. Bacterial RNase J subfamily. Homodimer, may be a subunit of the RNA degradosome. Zn(2+) serves as cofactor.

It localises to the cytoplasm. In terms of biological role, an RNase that has 5'-3' exonuclease and possibly endoonuclease activity. Involved in maturation of rRNA and in some organisms also mRNA maturation and/or decay. This is Ribonuclease J from Mycobacterium tuberculosis (strain CDC 1551 / Oshkosh).